We begin with the raw amino-acid sequence, 527 residues long: Sulfate adenylyltransferase (527 aa).

The N-terminal stretch occupies residues Met1–Tyr176. The catalytic stretch occupies residues Asp177–Lys406. Sulfate is bound at residue Gln206. ATP contacts are provided by residues Gln206–Asn209 and Gly302–His305. Active-site residues include Thr207, Arg208, and Asn209. Arg208 provides a ligand contact to sulfate. Ala306 is a binding site for sulfate. Residue Val344 participates in ATP binding. The required for oligomerization; adenylyl-sulfate kinase-like stretch occupies residues Gln407 to Tyr527.

It belongs to the sulfate adenylyltransferase family. In terms of assembly, homohexamer. Dimer of trimers.

Its subcellular location is the cytoplasm. The catalysed reaction is sulfate + ATP + H(+) = adenosine 5'-phosphosulfate + diphosphate. The protein operates within sulfur metabolism; hydrogen sulfide biosynthesis; sulfite from sulfate: step 1/3. Catalyzes the first intracellular reaction of sulfate assimilation, forming adenosine-5'-phosphosulfate (APS) from inorganic sulfate and ATP. Plays an important role in sulfate activation as a component of the biosynthesis pathway of sulfur-containing amino acids. This Candida albicans (strain SC5314 / ATCC MYA-2876) (Yeast) protein is Sulfate adenylyltransferase.